We begin with the raw amino-acid sequence, 448 residues long: UDP-N-acetylglucosamine--dolichyl-phosphate N-acetylglucosaminephosphotransferase (448 aa).

A helical membrane pass occupies residues 24–44 (ALVAAVGFGIAGYLATDMLIP). Residues 58–60 (KDL) and E70 contribute to the UDP-N-acetyl-alpha-D-glucosamine site. Transmembrane regions (helical) follow at residues 72 to 92 (IGAI…PFIF) and 129 to 149 (YLSA…DDLF). Residue K156 participates in dolichyl phosphate binding. 2 helical membrane-spanning segments follow: residues 157 to 177 (FFLP…DFGV) and 202 to 222 (YVYM…LAGV). 210-218 (IFCPNSINI) serves as a coordination point for dolichyl phosphate. N217 contacts Mg(2+). N223 is a binding site for UDP-N-acetyl-alpha-D-glucosamine. 4 consecutive transmembrane segments (helical) span residues 231 to 251 (IVLA…GPLA), 256 to 276 (HRFS…LWKW), 283 to 303 (VFVG…VGIL), and 309 to 329 (TMLL…PQLF). A Mg(2+)-binding site is contributed by D287. 336-338 (RHR) contributes to the UDP-N-acetyl-alpha-D-glucosamine binding site. 2 helical membrane passes run 387–407 (EIIS…FGPM) and 419–439 (LQFC…AIIF).

It belongs to the glycosyltransferase 4 family. It depends on Mg(2+) as a cofactor.

It is found in the endoplasmic reticulum membrane. It catalyses the reaction a di-trans,poly-cis-dolichyl phosphate + UDP-N-acetyl-alpha-D-glucosamine = an N-acetyl-alpha-D-glucosaminyl-diphospho-di-trans,poly-cis-dolichol + UMP. It functions in the pathway protein modification; protein glycosylation. Inhibited by natural nucleoside antibiotic tunicamycin, which acts as a structural analog and competitor of UDP-GlcNAc. Functionally, UDP-N-acetylglucosamine--dolichyl-phosphate N-acetylglucosaminephosphotransferase that operates in the biosynthetic pathway of dolichol-linked oligosaccharides, the glycan precursors employed in protein asparagine (N)-glycosylation. The assembly of dolichol-linked oligosaccharides begins on the cytosolic side of the endoplasmic reticulum membrane and finishes in its lumen. The sequential addition of sugars to dolichol pyrophosphate produces dolichol-linked oligosaccharides containing fourteen sugars, including two GlcNAcs, nine mannoses and three glucoses. Once assembled, the oligosaccharide is transferred from the lipid to nascent proteins by oligosaccharyltransferases. Catalyzes the initial step of dolichol-linked oligosaccharide biosynthesis, transfering GlcNAc-1-P from cytosolic UDP-GlcNAc onto the carrier lipid dolichyl phosphate (P-dolichol), yielding GlcNAc-P-P-dolichol embedded in the cytoplasmic leaflet of the endoplasmic reticulum membrane. The sequence is that of UDP-N-acetylglucosamine--dolichyl-phosphate N-acetylglucosaminephosphotransferase (ALG7) from Saccharomyces cerevisiae (strain ATCC 204508 / S288c) (Baker's yeast).